The sequence spans 433 residues: Enolase (433 aa).

Residue Gln167 coordinates (2R)-2-phosphoglycerate. The active-site Proton donor is the Glu209. Positions 246, 291, and 318 each coordinate Mg(2+). 4 residues coordinate (2R)-2-phosphoglycerate: Lys343, Arg372, Ser373, and Lys394. The active-site Proton acceptor is the Lys343.

It belongs to the enolase family. Component of the RNA degradosome, a multiprotein complex involved in RNA processing and mRNA degradation. Mg(2+) serves as cofactor.

The protein localises to the cytoplasm. It localises to the secreted. The protein resides in the cell surface. It carries out the reaction (2R)-2-phosphoglycerate = phosphoenolpyruvate + H2O. It participates in carbohydrate degradation; glycolysis; pyruvate from D-glyceraldehyde 3-phosphate: step 4/5. Its function is as follows. Catalyzes the reversible conversion of 2-phosphoglycerate (2-PG) into phosphoenolpyruvate (PEP). It is essential for the degradation of carbohydrates via glycolysis. This is Enolase from Edwardsiella ictaluri (strain 93-146).